The following is a 623-amino-acid chain: (-)-alpha-pinene synthase 1, chloroplastic (623 aa).

A chloroplast-targeting transit peptide spans 1 to 52 (MDLISVLPSASKSCVCLHKPLSSSTHKLKPFCKTIRILGMPRRWKFAGPSMS). Mg(2+) contacts are provided by aspartate 374, aspartate 378, and aspartate 526. The DDXXD motif motif lies at 374–378 (DDMYD).

It belongs to the terpene synthase family. Tpsd subfamily. Mg(2+) serves as cofactor. The cofactor is Mn(2+).

It localises to the plastid. The protein resides in the chloroplast. It carries out the reaction (2E)-geranyl diphosphate = (1S,5S)-alpha-pinene + diphosphate. The catalysed reaction is (2E)-geranyl diphosphate = (1S,5S)-beta-pinene + diphosphate. It catalyses the reaction (2E)-geranyl diphosphate = (-)-beta-phellandrene + diphosphate. It participates in terpene metabolism; oleoresin biosynthesis. The protein operates within secondary metabolite biosynthesis; terpenoid biosynthesis. In terms of biological role, monoterpene synthase (TPS) involved in the biosynthesis of monoterpene natural products included in conifer oleoresin secretions and volatile emissions; these compounds contribute to biotic and abiotic stress defense against herbivores and pathogens. Catalyzes the conversion of (2E)-geranyl diphosphate (GPP) to (-)-alpha-pinene and (-)-beta-pinene, and, to a lower extent, to (-)-beta-phellandrene. This Pinus banksiana (Jack pine) protein is (-)-alpha-pinene synthase 1, chloroplastic.